Reading from the N-terminus, the 597-residue chain is Golgin subfamily A member 8C (597 aa).

Disordered stretches follow at residues Met-1–Ser-80 and Lys-96–Glu-120. Residues Thr-38–Gly-50 are compositionally biased toward polar residues. Positions Ser-53 to Pro-70 are enriched in low complexity. 3 coiled-coil regions span residues Arg-81–Leu-141, Glu-199–Val-255, and Ser-296–Leu-394. A compositionally biased stretch (basic and acidic residues) spans Lys-100–Glu-120. Disordered regions lie at residues Leu-390 to Met-422, Pro-457 to Ala-498, and Pro-549 to Pro-576. The segment covering Pro-470 to Gly-483 has biased composition (gly residues). The span at Glu-553–Pro-563 shows a compositional bias: basic and acidic residues.

It belongs to the GOLGA8 family.

This chain is Golgin subfamily A member 8C (GOLGA8CP), found in Homo sapiens (Human).